The chain runs to 351 residues: Histidinol-phosphate aminotransferase (351 aa).

The segment at 1–26 (MRFRAELEPLSPYNPPRASQEAAAER) is disordered. The residue at position 223 (Lys-223) is an N6-(pyridoxal phosphate)lysine.

Belongs to the class-II pyridoxal-phosphate-dependent aminotransferase family. Histidinol-phosphate aminotransferase subfamily. As to quaternary structure, homodimer. It depends on pyridoxal 5'-phosphate as a cofactor.

The enzyme catalyses L-histidinol phosphate + 2-oxoglutarate = 3-(imidazol-4-yl)-2-oxopropyl phosphate + L-glutamate. Its pathway is amino-acid biosynthesis; L-histidine biosynthesis; L-histidine from 5-phospho-alpha-D-ribose 1-diphosphate: step 7/9. This Rubrobacter xylanophilus (strain DSM 9941 / JCM 11954 / NBRC 16129 / PRD-1) protein is Histidinol-phosphate aminotransferase.